Here is a 1669-residue protein sequence, read N- to C-terminus: Collagen alpha-3(IV) chain (1669 aa).

A signal peptide spans Met1 to Ser28. Positions Lys29 to Ala42 are 7S domain. A triple-helical region region spans residues Gly43–Pro1436. 2 disordered regions span residues Thr44 to Ser473 and Pro500 to Gly1439. Positions Pro54–Pro68 are enriched in low complexity. A compositionally biased stretch (pro residues) spans Pro105–Pro114. Residue Asn126 is glycosylated (N-linked (GlcNAc...) asparagine). A compositionally biased stretch (pro residues) spans Pro188–Pro200. A compositionally biased stretch (low complexity) spans Phe202 to Pro211. N-linked (GlcNAc...) asparagine glycosylation occurs at Asn253. A compositionally biased stretch (basic and acidic residues) spans Ser255 to Glu269. Low complexity-rich tracts occupy residues Pro279 to Pro290 and Ser382 to Pro393. Pro residues predominate over residues Pro416–Cys437. The segment covering Asn551–Leu560 has biased composition (low complexity). 2 stretches are compositionally biased toward pro residues: residues Pro596–Tyr617 and Leu654–Gln665. Positions Ala666–Gly684 are enriched in low complexity. Gly residues predominate over residues Gly778 to Gly787. The Cell attachment site signature appears at Arg830–Asp832. Positions Cys861–Ala876 are enriched in low complexity. Residues Lys922–Lys939 are compositionally biased toward basic and acidic residues. Low complexity predominate over residues Arg970–Pro985. Residues Arg994–Asp996 carry the Cell attachment site motif. Residues Ser1092 to Ser1103 show a composition bias toward low complexity. The segment covering Pro1128 to Pro1146 has biased composition (pro residues). The short motif at Arg1152–Asp1154 is the Cell attachment site element. The span at Pro1228–Pro1248 shows a compositional bias: low complexity. A compositionally biased stretch (pro residues) spans Glu1250–Pro1259. Positions Arg1304–Asp1306 match the Cell attachment site motif. The span at Pro1333–Arg1343 shows a compositional bias: pro residues. Low complexity-rich tracts occupy residues Gln1366–Pro1379 and Pro1402–Asn1429. An epitope recognized by Goodpasture antibodies region spans residues Gly1425 to Arg1443. Residues Gly1444–Arg1668 form the Collagen IV NC1 domain. 6 disulfides stabilise this stretch: Cys1459–Cys1550, Cys1492–Cys1547, Cys1504–Cys1510, Cys1569–Cys1664, Cys1603–Cys1661, and Cys1615–Cys1621. The interval Asn1478–Ala1556 is required for the anti-angiogenic activity of tumstatin. Met1532 is covalently cross-linked (S-Lysyl-methionine sulfilimine (Met-Lys) (interchain with K-1650)). The segment at Ala1609–Ser1627 is required for the anti-tumor cell activity of tumstatin. Residue Lys1650 forms an S-Lysyl-methionine sulfilimine (Lys-Met) (interchain with M-1532) linkage.

The protein belongs to the type IV collagen family. In terms of assembly, there are six type IV collagen isoforms, alpha 1(IV)-alpha 6(IV), each of which can form a triple helix structure with 2 other chains to generate type IV collagen network. The alpha 3(IV) chain forms a triple helical protomer with alpha 4(IV) and alpha 5(IV); this triple helical structure dimerizes through NC1-NC1 domain interactions such that the alpha 3(IV), alpha 4(IV) and alpha 5(IV) chains of one protomer connect with the alpha 5(IV), alpha 4(IV) and alpha 3(IV) chains of the opposite promoter, respectively. Interacts with ITGB3. Associates with LAMB2 at the neuromuscular junction and in GBM. In terms of processing, prolines at the third position of the tripeptide repeating unit (G-X-Y) are hydroxylated in some or all of the chains. Post-translationally, type IV collagens contain numerous cysteine residues which are involved in inter- and intramolecular disulfide bonding. 12 of these, located in the NC1 domain, are conserved in all known type IV collagens. The trimeric structure of the NC1 domains is stabilized by covalent bonds between Lys and Met residues. In terms of processing, phosphorylated. Thought to be phosphorylated by CERT, but CERT does not have kinase activity. Highly expressed in kidney and lung. Detected at lower levels in heart, muscle and skin.

It is found in the secreted. The protein resides in the extracellular space. Its subcellular location is the extracellular matrix. It localises to the basement membrane. Its function is as follows. Type IV collagen is the major structural component of glomerular basement membranes (GBM), forming a 'chicken-wire' meshwork together with laminins, proteoglycans and entactin/nidogen. In terms of biological role, tumstatin, a cleavage fragment corresponding to the collagen alpha 3(IV) NC1 domain, possesses both anti-angiogenic and anti-tumor cell activity; these two anti-tumor properties may be regulated via RGD-independent ITGB3-mediated mechanisms. This is Collagen alpha-3(IV) chain from Mus musculus (Mouse).